A 342-amino-acid polypeptide reads, in one-letter code: Glycerol-3-phosphate dehydrogenase [NAD(P)+] (342 aa).

3 residues coordinate NADPH: S13, W14, and K108. Sn-glycerol 3-phosphate is bound by residues K108, G139, and S141. Residue A143 participates in NADPH binding. The sn-glycerol 3-phosphate site is built by K194, D247, S257, R258, and N259. The active-site Proton acceptor is K194. NADPH is bound at residue R258. Residues V282 and E284 each contribute to the NADPH site.

It belongs to the NAD-dependent glycerol-3-phosphate dehydrogenase family.

It is found in the cytoplasm. The catalysed reaction is sn-glycerol 3-phosphate + NAD(+) = dihydroxyacetone phosphate + NADH + H(+). It catalyses the reaction sn-glycerol 3-phosphate + NADP(+) = dihydroxyacetone phosphate + NADPH + H(+). Its pathway is membrane lipid metabolism; glycerophospholipid metabolism. In terms of biological role, catalyzes the reduction of the glycolytic intermediate dihydroxyacetone phosphate (DHAP) to sn-glycerol 3-phosphate (G3P), the key precursor for phospholipid synthesis. The polypeptide is Glycerol-3-phosphate dehydrogenase [NAD(P)+] (Lactococcus lactis subsp. cremoris (strain MG1363)).